We begin with the raw amino-acid sequence, 335 residues long: Glyceraldehyde-3-phosphate dehydrogenase, cytosolic (335 aa).

Residues 13 to 14 (RI), Asp35, and Arg80 contribute to the NAD(+) site. D-glyceraldehyde 3-phosphate-binding positions include 151-153 (SCT), Thr182, 211-212 (TG), and Arg234. Cys152 acts as the Nucleophile in catalysis. NAD(+) is bound at residue Asn316.

The protein belongs to the glyceraldehyde-3-phosphate dehydrogenase family. In terms of assembly, homotetramer.

The protein resides in the cytoplasm. It catalyses the reaction D-glyceraldehyde 3-phosphate + phosphate + NAD(+) = (2R)-3-phospho-glyceroyl phosphate + NADH + H(+). It participates in carbohydrate degradation; glycolysis; pyruvate from D-glyceraldehyde 3-phosphate: step 1/5. This is Glyceraldehyde-3-phosphate dehydrogenase, cytosolic (GAPC) from Gracilaria gracilis (Red alga).